The chain runs to 263 residues: Endonuclease 8 (263 aa).

P2 acts as the Schiff-base intermediate with DNA in catalysis. E3 acts as the Proton donor in catalysis. K53 (proton donor; for beta-elimination activity) is an active-site residue. Positions 70, 125, and 169 each coordinate DNA. The FPG-type zinc finger occupies 229 to 263; it reads KVFHRDGERCERCGGIIEKTTLSSRPFYWCPGCQH. Catalysis depends on R253, which acts as the Proton donor; for delta-elimination activity.

It belongs to the FPG family. It depends on Zn(2+) as a cofactor.

The enzyme catalyses 2'-deoxyribonucleotide-(2'-deoxyribose 5'-phosphate)-2'-deoxyribonucleotide-DNA = a 3'-end 2'-deoxyribonucleotide-(2,3-dehydro-2,3-deoxyribose 5'-phosphate)-DNA + a 5'-end 5'-phospho-2'-deoxyribonucleoside-DNA + H(+). In terms of biological role, involved in base excision repair of DNA damaged by oxidation or by mutagenic agents. Acts as a DNA glycosylase that recognizes and removes damaged bases. Has a preference for oxidized pyrimidines, such as thymine glycol, 5,6-dihydrouracil and 5,6-dihydrothymine. Has AP (apurinic/apyrimidinic) lyase activity and introduces nicks in the DNA strand. Cleaves the DNA backbone by beta-delta elimination to generate a single-strand break at the site of the removed base with both 3'- and 5'-phosphates. The chain is Endonuclease 8 from Klebsiella pneumoniae subsp. pneumoniae (strain ATCC 700721 / MGH 78578).